Reading from the N-terminus, the 588-residue chain is Aspartate--tRNA ligase (588 aa).

E177 provides a ligand contact to L-aspartate. The tract at residues 201–204 is aspartate; it reads QLFK. L-aspartate is bound at residue R223. ATP is bound by residues 223 to 225 and Q232; that span reads RDE. H451 contributes to the L-aspartate binding site. E485 serves as a coordination point for ATP. Residue R492 participates in L-aspartate binding. 537 to 540 lines the ATP pocket; that stretch reads GLDR.

This sequence belongs to the class-II aminoacyl-tRNA synthetase family. Type 1 subfamily. As to quaternary structure, homodimer.

The protein resides in the cytoplasm. It catalyses the reaction tRNA(Asp) + L-aspartate + ATP = L-aspartyl-tRNA(Asp) + AMP + diphosphate. In terms of biological role, catalyzes the attachment of L-aspartate to tRNA(Asp) in a two-step reaction: L-aspartate is first activated by ATP to form Asp-AMP and then transferred to the acceptor end of tRNA(Asp). The polypeptide is Aspartate--tRNA ligase (Staphylococcus epidermidis (strain ATCC 35984 / DSM 28319 / BCRC 17069 / CCUG 31568 / BM 3577 / RP62A)).